Consider the following 254-residue polypeptide: 2-dehydro-3-deoxy-D-gluconate 5-dehydrogenase (254 aa).

The active-site Proton acceptor is the Y159.

Belongs to the short-chain dehydrogenases/reductases (SDR) family.

The enzyme catalyses 2-dehydro-3-deoxy-D-gluconate + NAD(+) = 3-deoxy-D-glycero-2,5-hexodiulosonate + NADH + H(+). Functionally, involved in the degradation of 3,6-anhydro-L-galactose, which is the major monomeric sugar of red macroalgae. Catalyzes the fourth step of the pathway, the reduction of 3-deoxy-D-glycero-2,5-hexodiulosonate (L-DDGal) to 2-dehydro-3-deoxy-D-gluconate (KDG). This is 2-dehydro-3-deoxy-D-gluconate 5-dehydrogenase from Pseudoalteromonas atlantica (strain T6c / ATCC BAA-1087).